Here is a 486-residue protein sequence, read N- to C-terminus: tRNA-2-methylthio-N(6)-dimethylallyladenosine synthase (486 aa).

The MTTase N-terminal domain maps to 35–151 (RNLYVESYGC…LPRLLATVDS (117 aa)). Cys-44, Cys-80, Cys-114, Cys-189, Cys-193, and Cys-196 together coordinate [4Fe-4S] cluster. Residues 175 to 419 (NSNGVSAFIS…IDKQRQHSFE (245 aa)) form the Radical SAM core domain. In terms of domain architecture, TRAM spans 422–485 (LKDIGKVYQV…TGTLLGEICT (64 aa)).

This sequence belongs to the methylthiotransferase family. MiaB subfamily. As to quaternary structure, monomer. Requires [4Fe-4S] cluster as cofactor.

It localises to the cytoplasm. The catalysed reaction is N(6)-dimethylallyladenosine(37) in tRNA + (sulfur carrier)-SH + AH2 + 2 S-adenosyl-L-methionine = 2-methylsulfanyl-N(6)-dimethylallyladenosine(37) in tRNA + (sulfur carrier)-H + 5'-deoxyadenosine + L-methionine + A + S-adenosyl-L-homocysteine + 2 H(+). Functionally, catalyzes the methylthiolation of N6-(dimethylallyl)adenosine (i(6)A), leading to the formation of 2-methylthio-N6-(dimethylallyl)adenosine (ms(2)i(6)A) at position 37 in tRNAs that read codons beginning with uridine. This Amoebophilus asiaticus (strain 5a2) protein is tRNA-2-methylthio-N(6)-dimethylallyladenosine synthase.